Consider the following 592-residue polypeptide: Calnexin (592 aa).

The first 20 residues, 1–20, serve as a signal peptide directing secretion; sequence MEGKWLLCMLLVLGTAIVEA. Topologically, residues 21-481 are lumenal; the sequence is HDGHDDDVID…QMIEAAEERP (461 aa). Positions 74 and 117 each coordinate Ca(2+). At lysine 137 the chain carries N6-acetyllysine. Cysteine 160 and cysteine 194 are oxidised to a cystine. 4 residues coordinate an alpha-D-glucoside: tyrosine 164, lysine 166, tyrosine 185, and aspartate 192. The disordered stretch occupies residues 260 to 345; sequence GNLLNDMTPP…AEKPEDWDED (86 aa). Residues 274–319 show a composition bias toward basic and acidic residues; the sequence is REIEDPEDRKPEDWDERPKIPDPEAVKPDDWDEDAPAKIPDEEATK. Residues 276 to 409 form a p domain (Extended arm) region; the sequence is IEDPEDRKPE…RKIPNPDFFE (134 aa). 5 tandem repeats follow at residues 278–290, 295–307, 314–326, 333–345, and 348–358. 4 X approximate repeats regions lie at residues 278 to 345 and 348 to 405; these read DPED…WDED and GEWE…IPNP. Residues 323–345 are compositionally biased toward acidic residues; that stretch reads WLDDEPEYVPDPDAEKPEDWDED. The interval 326–359 is interaction with PPIB; the sequence is DEPEYVPDPDAEKPEDWDEDMDGEWEAPQIANPR. Residues cysteine 360 and cysteine 366 are joined by a disulfide bond. Tandem repeats lie at residues 367 to 377, 381 to 391, and 395 to 405. Residue glutamate 425 coordinates an alpha-D-glucoside. Aspartate 436 is a binding site for Ca(2+). A helical membrane pass occupies residues 482 to 502; the sequence is WLWVVYILTVALPVFLVILFC. S-palmitoyl cysteine attachment occurs at residues cysteine 502 and cysteine 503. Over 503–592 the chain is Cytoplasmic; that stretch reads CSGKKQTSGM…SPRNRKPRRE (90 aa). Residues 503 to 592 form a sufficient to mediate interaction with SGIP1 region; the sequence is CSGKKQTSGM…SPRNRKPRRE (90 aa). Positions 511–592 are disordered; the sequence is GMEYKKTDAP…SPRNRKPRRE (82 aa). Positions 525 to 547 are enriched in acidic residues; the sequence is KEEEEEKEEEKDKGDEEEEGEEK. The residue at position 554 (serine 554) is a Phosphoserine. Threonine 562 bears the Phosphothreonine mark. At serine 564 the chain carries Phosphoserine; by MAPK3. Serine 583 bears the Phosphoserine mark.

It belongs to the calreticulin family. As to quaternary structure, interacts with MAPK3/ERK1. Interacts with KCNH2. Associates with ribosomes. Interacts with SGIP1; involved in negative regulation of endocytosis. The palmitoylated form interacts with the ribosome-translocon complex component SSR1, promoting efficient folding of glycoproteins. Interacts with SERPINA2P/SERPINA2 and with the S and Z variants of SERPINA1. Interacts with PPIB. Interacts with ZNRF4. Interacts with SMIM22. Interacts with TMX2. Interacts with TMEM35A/NACHO. Interacts with CHRNA7. Interacts with reticulophagy regulators RETREG2 and RETREG3. Interacts with DNM1L; may form part of a larger protein complex at the ER-mitochondrial interface during mitochondrial fission. Interacts with ADAM7. In terms of assembly, (Microbial infection) Interacts with HBV large envelope protein, isoform L. (Microbial infection) Interacts with HBV large envelope protein, isoform M; this association may be essential for isoform M proper secretion. Phosphorylated at Ser-564 by MAPK3/ERK1. Phosphorylation by MAPK3/ERK1 increases its association with ribosomes. Post-translationally, palmitoylation by DHHC6 leads to the preferential localization to the perinuclear rough ER. It mediates the association of calnexin with the ribosome-translocon complex (RTC) which is required for efficient folding of glycosylated proteins. In terms of processing, ubiquitinated, leading to proteasomal degradation. Probably ubiquitinated by ZNRF4.

The protein resides in the endoplasmic reticulum membrane. It localises to the mitochondrion membrane. It is found in the melanosome membrane. Its function is as follows. Calcium-binding protein that interacts with newly synthesized monoglucosylated glycoproteins in the endoplasmic reticulum. It may act in assisting protein assembly and/or in the retention within the ER of unassembled protein subunits. It seems to play a major role in the quality control apparatus of the ER by the retention of incorrectly folded proteins. Associated with partial T-cell antigen receptor complexes that escape the ER of immature thymocytes, it may function as a signaling complex regulating thymocyte maturation. Additionally it may play a role in receptor-mediated endocytosis at the synapse. This chain is Calnexin (CANX), found in Homo sapiens (Human).